Reading from the N-terminus, the 777-residue chain is Glucocorticoid receptor (777 aa).

Over residues 1-14 (MDSKESLTPGKEEN) the composition is skewed to basic and acidic residues. Positions 1–22 (MDSKESLTPGKEENPSSVLTQE) are disordered. Residues 1 to 420 (MDSKESLTPG…TATTGPPPKL (420 aa)) are modulating. Threonine 8 carries the post-translational modification Phosphothreonine. Arginine 23 is subject to Omega-N-methylarginine. 4 positions are modified to phosphoserine: serine 45, serine 113, serine 134, and serine 141. The disordered stretch occupies residues 130–183 (NRSTSVPENPKSSASSSVSAAPKEKEFPKTHSDVSSEQQNLKGQTGTNGGNAKL). Residues 134 to 150 (SVPENPKSSASSSVSAA) show a composition bias toward low complexity. The segment covering 151 to 163 (PKEKEFPKTHSDV) has biased composition (basic and acidic residues). The span at 164-174 (SSEQQNLKGQT) shows a compositional bias: polar residues. 3 positions are modified to phosphoserine: serine 203, serine 211, and serine 226. A Glycyl lysine isopeptide (Lys-Gly) (interchain with G-Cter in SUMO2) cross-link involves residue lysine 258. Serine 267 carries the post-translational modification Phosphoserine. Residues lysine 277 and lysine 293 each participate in a glycyl lysine isopeptide (Lys-Gly) (interchain with G-Cter in SUMO); alternate cross-link. Glycyl lysine isopeptide (Lys-Gly) (interchain with G-Cter in SUMO2); alternate cross-links involve residues lysine 277 and lysine 293. Low complexity predominate over residues 394–414 (SSPSMRPDVSSPPSSSSTATT). The disordered stretch occupies residues 394–415 (SSPSMRPDVSSPPSSSSTATTG). Serine 404 carries the phosphoserine modification. Lysine 419 is covalently cross-linked (Glycyl lysine isopeptide (Lys-Gly) (interchain with G-Cter in ubiquitin)). 2 NR C4-type zinc fingers span residues 421–441 (CLVCSDEASGCHYGVLTCGSC) and 457–481 (CAGRNDCIIDKIRRKNCPACRYRKC). Positions 421-486 (CLVCSDEASG…RYRKCLQAGM (66 aa)) form a DNA-binding region, nuclear receptor. Residues lysine 480, lysine 492, lysine 494, and lysine 495 each carry the N6-acetyllysine modification. The interaction with CLOCK stretch occupies residues 485-777 (GMNLEARKTK…NIRKLLFHQK (293 aa)). Residues 487 to 523 (NLEARKTKKKIKGIQQATTGVSQETSENPANKTIVPA) are hinge. The region spanning 524–758 (TLPQLTPTLV…FPEMLAEIIT (235 aa)) is the NR LBD domain. An interaction with CRY1 region spans residues 532 to 697 (LVSLLEVIEP…EIRMTYIKEL (166 aa)). Lysine 703 is covalently cross-linked (Glycyl lysine isopeptide (Lys-Gly) (interchain with G-Cter in SUMO)).

This sequence belongs to the nuclear hormone receptor family. NR3 subfamily. As to quaternary structure, heteromultimeric cytoplasmic complex with HSP90AA1, HSPA1A/HSPA1B, and FKBP5 or another immunophilin such as PPID, STIP1, or the immunophilin homolog PPP5C. Upon ligand binding FKBP5 dissociates from the complex and FKBP4 takes its place, thereby linking the complex to dynein and mediating transport to the nucleus, where the complex dissociates. Probably forms a complex composed of chaperones HSP90 and HSP70, co-chaperones CDC37, PPP5C, TSC1 and client protein TSC2, CDK4, AKT, RAF1 and NR3C1; this complex does not contain co-chaperones STIP1/HOP and PTGES3/p23. Directly interacts with UNC45A. Binds to DNA as a homodimer, and as heterodimer with NR3C2 or the retinoid X receptor. Binds STAT5A and STAT5B homodimers and heterodimers. Interacts with NRIP1, POU2F1, POU2F2 and TRIM28. Interacts with several coactivator complexes, including the SMARCA4 complex, CREBBP/EP300, TADA2L (Ada complex) and p160 coactivators such as NCOA2 and NCOA6. Interaction with BAG1 inhibits transactivation. Interacts with HEXIM1 and TGFB1I1. Interacts with NCOA1. Interacts with NCOA3, SMARCA4, SMARCC1, SMARCD1, and SMARCE1. Interacts with CLOCK, CRY1 and CRY2 in a ligand-dependent fashion. Interacts with CIART. Interacts with RWDD3. Interacts with UBE2I/UBC9 and this interaction is enhanced in the presence of RWDD3. Interacts with GRIP1. Interacts with NR4A3 (via nuclear receptor DNA-binding domain), represses transcription activity of NR4A3 on the POMC promoter Nur response element (NurRE). Directly interacts with PNRC2 to attract and form a complex with UPF1 and DCP1A; the interaction leads to rapid mRNA degradation. Interacts with GSK3B. Interacts with FNIP1 and FNIP2. Interacts (via C-terminus) with HNRNPU (via C-terminus). Interacts with MCM3AP. Interacts (via domain NR LBD) with HSP90AA1 and HSP90AB1. In the absence of hormonal ligand, interacts with TACC1. Interacts (via NR LBD domain) with ZNF764 (via KRAB domain); the interaction regulates transcription factor activity of NR3C1 by directing its actions toward certain biologic pathways. In terms of processing, acetylation by CLOCK reduces its binding to glucocorticoid response elements and its transcriptional activity. Increased proteasome-mediated degradation in response to glucocorticoids. Post-translationally, phosphorylated in the absence of hormone; becomes hyperphosphorylated in the presence of glucocorticoid. The Ser-203, Ser-226 and Ser-404-phosphorylated forms are mainly cytoplasmic, and the Ser-211-phosphorylated form is nuclear. Phosphorylation at Ser-211 increases transcriptional activity. Phosphorylation at Ser-203, Ser-226 and Ser-404 decreases signaling capacity. Phosphorylation at Ser-404 may protect from glucocorticoid-induced apoptosis. Phosphorylation at Ser-203 and Ser-211 is not required in regulation of chromosome segregation. May be dephosphorylated by PPP5C, attenuates NR3C1 action. In terms of processing, ubiquitinated by UBR5, leading to its degradation: UBR5 specifically recognizes and binds ligand-bound NR3C1 when it is not associated with coactivators (NCOAs). In presence of NCOAs, the UBR5-degron is not accessible, preventing its ubiquitination and degradation. Sumoylation at Lys-277 and Lys-293 negatively regulates its transcriptional activity. Sumoylation at Lys-703 positively regulates its transcriptional activity in the presence of RWDD3. Sumoylation at Lys-277 and Lys-293 is dispensable whereas sumoylation at Lys-703 is critical for the stimulatory effect of RWDD3 on its transcriptional activity. Heat shock increases sumoylation in a RWDD3-dependent manner.

Its subcellular location is the cytoplasm. The protein localises to the nucleus. It localises to the mitochondrion. It is found in the cytoskeleton. The protein resides in the spindle. Its subcellular location is the microtubule organizing center. The protein localises to the centrosome. It localises to the chromosome. It is found in the nucleoplasm. Functionally, receptor for glucocorticoids (GC). Has a dual mode of action: as a transcription factor that binds to glucocorticoid response elements (GRE), both for nuclear and mitochondrial DNA, and as a modulator of other transcription factors. Affects inflammatory responses, cellular proliferation and differentiation in target tissues. Involved in chromatin remodeling. Plays a role in rapid mRNA degradation by binding to the 5' UTR of target mRNAs and interacting with PNRC2 in a ligand-dependent manner which recruits the RNA helicase UPF1 and the mRNA-decapping enzyme DCP1A, leading to RNA decay. Could act as a coactivator for STAT5-dependent transcription upon growth hormone (GH) stimulation and could reveal an essential role of hepatic GR in the control of body growth. Mediates glucocorticoid-induced apoptosis. Promotes accurate chromosome segregation during mitosis. May act as a tumor suppressor. May play a negative role in adipogenesis through the regulation of lipolytic and antilipogenic gene expression. This is Glucocorticoid receptor (NR3C1) from Saguinus oedipus (Cotton-top tamarin).